Here is a 249-residue protein sequence, read N- to C-terminus: MKQYQTEAIVLRASAVREADRTLVLLTRDRGKLRVWAHGAARPTSRKRGAVQPFCRSRFLLERGREIDVVRQAEALEEFPALHADLEALALAGYVCELAEGFAAEGQAEPGIYGLLLQVLRRLAEDKSGLPVRFFEARILALTGFGPELGSCAGCGAQPVVPARFSPALGGVLCRGCRDRDPPARPCRSAVVQVLGKLLEWPLDRLKVLRIDAATGREVADILQACVCHHLEREPRSLAFLRKMGISSS.

It belongs to the RecO family.

Functionally, involved in DNA repair and RecF pathway recombination. The polypeptide is DNA repair protein RecO (Desulforudis audaxviator (strain MP104C)).